A 301-amino-acid polypeptide reads, in one-letter code: Sulfate adenylyltransferase subunit 2 (301 aa).

This sequence belongs to the PAPS reductase family. CysD subfamily. In terms of assembly, heterodimer composed of CysD, the smaller subunit, and CysN.

It carries out the reaction sulfate + ATP + H(+) = adenosine 5'-phosphosulfate + diphosphate. Its pathway is sulfur metabolism; hydrogen sulfide biosynthesis; sulfite from sulfate: step 1/3. With CysN forms the ATP sulfurylase (ATPS) that catalyzes the adenylation of sulfate producing adenosine 5'-phosphosulfate (APS) and diphosphate, the first enzymatic step in sulfur assimilation pathway. APS synthesis involves the formation of a high-energy phosphoric-sulfuric acid anhydride bond driven by GTP hydrolysis by CysN coupled to ATP hydrolysis by CysD. This chain is Sulfate adenylyltransferase subunit 2, found in Shewanella loihica (strain ATCC BAA-1088 / PV-4).